We begin with the raw amino-acid sequence, 93 residues long: Large ribosomal subunit protein uL23c (93 aa).

This sequence belongs to the universal ribosomal protein uL23 family. As to quaternary structure, part of the 50S ribosomal subunit.

It localises to the plastid. The protein resides in the chloroplast. Functionally, binds to 23S rRNA. In Fragaria ananassa (Strawberry), this protein is Large ribosomal subunit protein uL23c (rpl23).